The sequence spans 1047 residues: MALPSLLLVVAALAGGVRPPGARNLTLAVVLPEHNLSYAWAWPRVGPAVALAMEALGRALPVDLRFVSSELDGACSEYLAPLRAVDLKLYHDPDLLLGPGCVYPAASVARFASHWRLPLLTAGAVASGFSAKSEHYRTLVRTGPSAPKLGEFVVMLHGHFNWTARAALLYLDARTDDRPHYFTIEGVFEALQGSNLSVQHQVYAREPGGPEQATHFIRANGRIVYICGPLEMLHEILLQAQRENLTNGDYVFFYLDVFGESLRAGPTRSMGRPWQDNRTREQAQALREAFQTVLVITYREPPNPEYQEFQNRLLIRAREDFGVELAPSLMNLIAGCFYDGILLYAEVLNETIQEGGTREDGLRIVEKMQGRRYRGVTGLVVMDKNNDRETDFVLWAMGDLVSGDFQPAAHYSGAEKQIWWTGRPIPWVKGVPPLDNPPCAFDMDDPSCDKTPLSTLAIVALGTGITFIMFGVSSFLIFRKLMLEKELASMLWRIRWEELQFGNSERCHKGAGSRLTLSLRGSSYGSLMTAHGKYQIFANTGHFKGNVVAIKHVNKKRIELTRQVLFELKHMRDVQFNHLTRFIGACIDPPNICIVTEYCPRGSLQDILENDSINLDWMFRYSLINDLVKGMAFLHNSIIASHGSLKSSNCVVDSRFVLKITDYGLASFRSTAEPDDSHALYAKKLWTAPELLSGNPLPTTGMQKADVYSFGIILQEIALRSGPFYLEGLDLSPKEIVQKVRNGQRPYFRPSIDRTQLNEELVLLMERCWAQDPAERPDFGQIKGFIRRFNKEGGTSILDNLLLRMEQYANNLEKLVEERTQAYLEEKRKAEALLYQILPHSVAEQLKRGETVQAEAFDSVTIYFSDIVGFTALSAESTPMQVVTLLNDLYTCFDAIIDNFDVYKVETIGDAYMVVSGLPGRNGQRHAPEIARMALALLDAVSSFRIRHRPHDQLRLRIGVHTGPVCAGVVGLKMPRYCLFGDTVNTASRMESNGQALKIHVSSTTKDALDELGCFQLELRGDVEMKGKGKMRTYWLLGERKGPAGLL.

Residues 1–16 form the signal peptide; the sequence is MALPSLLLVVAALAGG. Topologically, residues 17–458 are extracellular; the sequence is VRPPGARNLT…DKTPLSTLAI (442 aa). N-linked (GlcNAc...) asparagine glycosylation is found at Asn24 and Asn35. A disulfide bridge connects residues Cys75 and Cys101. N-linked (GlcNAc...) asparagine glycosylation is found at Asn161, Asn195, Asn244, Asn277, and Asn349. A helical transmembrane segment spans residues 459–478; sequence VALGTGITFIMFGVSSFLIF. The Cytoplasmic segment spans residues 479–1047; sequence RKLMLEKELA…GERKGPAGLL (569 aa). Ser513 is subject to Phosphoserine. In terms of domain architecture, Protein kinase spans 513 to 786; the sequence is SRLTLSLRGS…PDFGQIKGFI (274 aa). A Phosphothreonine modification is found at Thr516. A phosphoserine mark is found at Ser518, Ser522, Ser523, and Ser526. Thr529 carries the phosphothreonine modification. The region spanning 861-991 is the Guanylate cyclase domain; that stretch reads TIYFSDIVGF…DTVNTASRME (131 aa).

Belongs to the adenylyl cyclase class-4/guanylyl cyclase family. Post-translationally, phosphorylated. Phosphorylation of the protein kinase-like domain is required for full activation by CNP. In terms of processing, glycosylated.

Its subcellular location is the cell membrane. It catalyses the reaction GTP = 3',5'-cyclic GMP + diphosphate. In terms of biological role, receptor for the C-type natriuretic peptide NPPC/CNP hormone. Has guanylate cyclase activity upon binding of its ligand. May play a role in the regulation of skeletal growth. This chain is Atrial natriuretic peptide receptor 2 (NPR2), found in Bos taurus (Bovine).